The following is a 1106-amino-acid chain: Protein transport protein Sec31A (1106 aa).

WD repeat units lie at residues 4-47 (KEVD…EIFE), 68-111 (RYHK…AGDK), 120-160 (KHTG…TPMT), 166-206 (QPPE…PIIK), 209-254 (DHSN…SPLR), 258-298 (NHAR…VLYE), and 301-342 (TNTQ…DGLR). Positions 161–471 (PGAKTQPPED…IDASQTEFEK (311 aa)) are interaction with SEC13. One copy of the WD 8; interaction with SEC13 repeat lies at 397–430 (SFSFGGKLVTFENVRMPSHQGAEQQQQQHHVFIS). Residues serine 527 and serine 532 each carry the phosphoserine modification. Lysine 647 is covalently cross-linked (Glycyl lysine isopeptide (Lys-Gly) (interchain with G-Cter in ubiquitin)). The residue at position 799 (serine 799) is a Phosphoserine. The interval 800–999 (PKIPYEEQQL…TKKITKKPIP (200 aa)) is interaction with PDCD6. Residues 842 to 848 (GFIMHGN) carry the ALG-2-binding site motif-2 (ABS-2) motif. The interval 859 to 980 (TSPGHMHTQV…EGAPGAPIGN (122 aa)) is disordered. The span at 917 to 939 (PQSQMLQQQPSAPVPLSSQSSFP) shows a compositional bias: polar residues. Residue threonine 1047 is modified to Phosphothreonine. Position 1049 is a phosphoserine (serine 1049). Lysine 1103 is covalently cross-linked (Glycyl lysine isopeptide (Lys-Gly) (interchain with G-Cter in ubiquitin)).

The protein belongs to the WD repeat SEC31 family. As to quaternary structure, COPII is composed of at least 5 proteins: the SEC23/24 complex, the SEC13/31 complex and SAR1. SEC13 and SEC31 make a 2:2 tetramer that forms the edge element of the COPII outer coat. The tetramer self-assembles in multiple copies to form the complete polyhedral cage. Interacts (via WD 8) with SEC13. Interacts with PDCD6; interaction takes place in response to cytosolic calcium increase and leads to bridge together the BCR(KLHL12) complex and SEC31A, leading to monoubiquitination. Interacts with KLHL12. Post-translationally, monoubiquitinated by the BCR(KLHL12) E3 ubiquitin ligase complex, leading to regulate the size of COPII coats.

The protein resides in the cytoplasm. The protein localises to the cytoplasmic vesicle. It localises to the COPII-coated vesicle membrane. Its subcellular location is the endoplasmic reticulum membrane. Functionally, component of the coat protein complex II (COPII) which promotes the formation of transport vesicles from the endoplasmic reticulum (ER). The coat has two main functions, the physical deformation of the endoplasmic reticulum membrane into vesicles and the selection of cargo molecules. In Pongo abelii (Sumatran orangutan), this protein is Protein transport protein Sec31A (SEC31A).